Here is a 338-residue protein sequence, read N- to C-terminus: Large ribosomal subunit protein uL10 (338 aa).

The disordered stretch occupies residues Ile302–Gly338. Acidic residues predominate over residues Glu310–Ala329.

The protein belongs to the universal ribosomal protein uL10 family. Part of the 50S ribosomal subunit. Forms part of the ribosomal stalk which helps the ribosome interact with GTP-bound translation factors. Forms a heptameric L10(L12)2(L12)2(L12)2 complex, where L10 forms an elongated spine to which the L12 dimers bind in a sequential fashion.

Forms part of the ribosomal stalk, playing a central role in the interaction of the ribosome with GTP-bound translation factors. This Thermococcus sibiricus (strain DSM 12597 / MM 739) protein is Large ribosomal subunit protein uL10.